A 1005-amino-acid polypeptide reads, in one-letter code: Myosin IE heavy chain (1005 aa).

In terms of domain architecture, Myosin motor spans 8–693 (EGVPDFVLLN…TLFYFEEKRE (686 aa)). 101–108 (GESGAGKT) is an ATP binding site. The interval 539-562 (SDPLVQGLFPPTRPEDSKKRPETA) is disordered. A compositionally biased stretch (basic and acidic residues) spans 551–560 (RPEDSKKRPE). An actin-binding region spans residues 556–630 (KKRPETAGSQ…RAGFAGRIEY (75 aa)). 2 IQ domains span residues 694–722 (LEMP…RKAA) and 716–745 (WNQR…HRAF). Positions 810 to 1004 (KKKWDFRRHF…KGNQATIQFK (195 aa)) constitute a TH1 domain.

It belongs to the TRAFAC class myosin-kinesin ATPase superfamily. Myosin family. In terms of assembly, myosin I heavy chain is single-headed. Dimer of a heavy and a light chain. Inability to self-assemble into filaments.

Functionally, myosin is a protein that binds to actin and has ATPase activity that is activated by actin. May play a role in moving membranes relative to actin. The polypeptide is Myosin IE heavy chain (myoE) (Dictyostelium discoideum (Social amoeba)).